A 239-amino-acid chain; its full sequence is Type II restriction enzyme Eco47II (239 aa).

The enzyme catalyses Endonucleolytic cleavage of DNA to give specific double-stranded fragments with terminal 5'-phosphates.. Its function is as follows. A P subtype restriction enzyme that recognizes the double-stranded sequence 5'-GGNCC-3'; the cleavage site is unknown. This Escherichia coli protein is Type II restriction enzyme Eco47II.